Reading from the N-terminus, the 464-residue chain is Protein phosphatase 2C homolog 2 (464 aa).

In terms of domain architecture, PPM-type phosphatase spans 23–292 (AFGLCAMQGW…DNMSIVVVAL (270 aa)). Mn(2+) contacts are provided by aspartate 62, glycine 63, aspartate 234, and aspartate 283. Positions 174-355 (DGFVEMDRVN…KPQDKFTRDH (182 aa)) are interaction with IRE1. Disordered stretches follow at residues 361-398 (SVTAADNDDPMDIDDTDADTDAENLDPSSQSKSKTSGP) and 434-464 (QLLQTMGHDPASSHPENDSNTDHKAGRSHLQ). Positions 366 to 384 (DNDDPMDIDDTDADTDAEN) are enriched in acidic residues. Threonine 376 and threonine 380 each carry phosphothreonine. Positions 386–396 (DPSSQSKSKTS) are enriched in polar residues. A compositionally biased stretch (basic and acidic residues) spans 448–458 (PENDSNTDHKA).

The protein belongs to the PP2C family. Interacts with IRE1 (when phosphorylated); the interaction is direct and serves to attenuate the endoplasmic reticulum unfolded protein response. Interacts (when phosphorylated) with RAD53 (via domain FHA 1); the interaction is direct and serves to regulate DNA damage checkpoint signaling. Interacts with the ATG17-ATG29-ATG31 and ATG1-ATG13 supercomplex; to regulate induction of autophagy. Requires Mg(2+) as cofactor. The cofactor is Mn(2+).

Its subcellular location is the nucleus. It is found in the cytoplasm. It localises to the cytosol. The catalysed reaction is O-phospho-L-seryl-[protein] + H2O = L-seryl-[protein] + phosphate. The enzyme catalyses O-phospho-L-threonyl-[protein] + H2O = L-threonyl-[protein] + phosphate. Functionally, dephosphorylating regulator for many key proteins. Dephosphorylates the cell cycle master regulator CDC28/cyclin-dependent kinase 1; its activity appears redundant with phosphatase PTC3. Dephosphorylates HOG1 at 'Thr-171', to attenuate activation of the stress-activated p38MAPK cascade; its activity appears redundant with phosphatase PTC3. Positively regulates both nonselective macroautophagy as well as the selective cytoplasm-to-vacuole (cvt) autophagy pathway and the genotoxin-induced targeted autophagy (GTA) pathway, possibly by dephosphorylating ATG13 to enable the interaction between the ATG17-ATG29-ATG31 and ATG1-ATG13 complexes; its activity appears redundant with phosphatase PTC3. Dephosphorylates RAD53, to regulate DNA damage checkpoint signaling. Dephosphorylates IRE1, to negatively regulate the endoplasmic reticulum unfolded protein response. This chain is Protein phosphatase 2C homolog 2 (PTC2), found in Saccharomyces cerevisiae (strain ATCC 204508 / S288c) (Baker's yeast).